A 106-amino-acid chain; its full sequence is Putative protein SH (106 aa).

The disordered stretch occupies residues 48–106 (HSQQNNSGHQFGDRFHSKGHQDTEGRILWKEASTRTTDSTETADTQLVQRQGNGGICLS). Over residues 58–80 (FGDRFHSKGHQDTEGRILWKEAS) the composition is skewed to basic and acidic residues. Residues 81-92 (TRTTDSTETADT) show a composition bias toward low complexity.

Heart.

In terms of biological role, may be involved with the regulation of GNRH gene expression. It is not known if this protein is transcribed. The chain is Putative protein SH from Rattus norvegicus (Rat).